Reading from the N-terminus, the 52-residue chain is Rubredoxin (52 aa).

The Rubredoxin-like domain maps to 1-52; sequence MKKYVCTVCGYEYDPAEGDPDNGVKPGTSFDDLPADWVCPVCGAPKSEFEAA. Fe cation contacts are provided by Cys6, Cys9, Cys39, and Cys42.

It belongs to the rubredoxin family. Fe(3+) serves as cofactor.

It is found in the cytoplasm. Its function is as follows. Rubredoxin is a small nonheme, iron protein lacking acid-labile sulfide. Its single Fe, chelated to 4 Cys, functions as an electron acceptor and may also stabilize the conformation of the molecule. Electron acceptor for cytoplasmic lactate dehydrogenase. The polypeptide is Rubredoxin (rub) (Nitratidesulfovibrio vulgaris (strain ATCC 29579 / DSM 644 / CCUG 34227 / NCIMB 8303 / VKM B-1760 / Hildenborough) (Desulfovibrio vulgaris)).